The primary structure comprises 2373 residues: Highly reducing polyketide synthase (2373 aa).

Residues 19–446 (QEPIAVVGIA…GSNAHVIVEE (428 aa)) enclose the Ketosynthase family 3 (KS3) domain. Catalysis depends on for beta-ketoacyl synthase activity residues Cys192, His329, and His369. The segment at 560-874 (IFTGQGAQWP…QYTSAMARGA (315 aa)) is malonyl-CoA:ACP transacylase (MAT) domain. Ser652 serves as the catalytic For malonyltransferase activity. The interval 942 to 1078 (HDLLGSKVLG…GLIRIDEDVP (137 aa)) is N-terminal hotdog fold. Positions 942-1241 (HDLLGSKVLG…LSGLRYTRID (300 aa)) are dehydratase (DH) domain. The region spanning 942 to 1246 (HDLLGSKVLG…YTRIDTGPSV (305 aa)) is the PKS/mFAS DH domain. Catalysis depends on His974, which acts as the Proton acceptor; for dehydratase activity. Residues 1090–1246 (SHQVDASLWH…YTRIDTGPSV (157 aa)) are C-terminal hotdog fold. Asp1154 acts as the Proton donor; for dehydratase activity in catalysis. Positions 1669 to 1985 (GTTDSLIYSE…SANHIGKIVI (317 aa)) are enoyl reductase (ER) domain. The interval 2010 to 2187 (GYLLIGGLKG…NSVDLGAIQD (178 aa)) is ketoreductase (KR) domain. In terms of domain architecture, Carrier spans 2294–2370 (AIHDAVIDVT…QLAQKIVARL (77 aa)). Ser2330 is subject to O-(pantetheine 4'-phosphoryl)serine.

Pantetheine 4'-phosphate serves as cofactor.

It participates in mycotoxin biosynthesis. Highly reducing polyketide synthase; part of the gene cluster that mediates the biosynthesis of brefeldin A (BFA), a protein transport inhibitor that shows antiviral, antifungal, and antitumor properties. The proposed biosynthesis of BFA involves formation of an acyclic polyketide chain that is differentially tailored throughout the backbone. The highly reducing polyketide synthase Bref-PKS is proposed to synthesize the precisely reduced octaketide precursor, which could then be directly offloaded by the thiohydrolase enzyme Bref-TH followed by a cytochrome P450 monooxygenase-mediated formation of the cyclopentane ring and macrocyclization to afford 7-deoxy BFA. Alternatively, the first ring annulation can also occur on the ACP-tethered intermediate before the thiohydrolase release and lactonization. The C7-hydroxylation by another cytochrome P450 monooxygenase is believed to be the final step in the process to obtain the final structure of BFA. In addition to the HRPKS Bref-PKS and the thiohydrolase Bref-TH, the brefeldin A biosynthesis cluster contains 4 cytochrome p450 monooxygenases (called orf3 to orf6), as well a the probable cluster-specific transcription regulator orf8. The chain is Highly reducing polyketide synthase from Eupenicillium brefeldianum (Penicillium brefeldianum).